A 478-amino-acid chain; its full sequence is MWKAKTCFRQIYLTVLIRRYSRVAPPPSSVIRVTNNVAHLGPPKQGPLPRQLISLPPFPGHPLPGKNAGADGDDGDSGGHVTAISWVKYYFEEIYDKAIQTHFTKGLVQMEFRGRRDASREKEDGAIPMRKIKHNEVMQIGDKIWLPVSIAEMRISKRYDTIPSGTLYPNADEIAYLQRLVRFKDSAIIVLNKPPKLPVKGNVPIHNSMDALAAAALSFGNDEGPRLVHRLDRETSGLLVMGRTKESIDYLHSVFSDYKGRNSSCKAWNKACEAMYQQYWALVIGSPKEKEGLISAPLSKVLLDDGKTDRVVLAQGSGFEASQDAITEYKVLGPKINGCSWVELRPITSRKHQLRVHCAEALGTPIVGDYKYGWFVHKRWKQMPQVDIEPTTGKPYKLRRPEGLDVQKGSVLSKVPLLHLHCREMVLPNIAKFLHVMNQQETEPLHTGIIDKPDLLRFVASMPSHMKISWNLMSSYLV.

A mitochondrion-targeting transit peptide spans 1–20 (MWKAKTCFRQIYLTVLIRRY). Residues 92 to 162 (EEIYDKAIQT…MRISKRYDTI (71 aa)) enclose the S4 RNA-binding domain. Asp-232 is an active-site residue.

This sequence belongs to the pseudouridine synthase RluA family.

The protein localises to the mitochondrion. The catalysed reaction is a uridine in RNA = a pseudouridine in RNA. The sequence is that of RNA pseudouridine synthase 3, mitochondrial from Arabidopsis thaliana (Mouse-ear cress).